The following is a 565-amino-acid chain: Augmin complex subunit dgt3 (565 aa).

2 coiled-coil regions span residues 135 to 171 and 212 to 241; these read ELQL…AKKA and QDYD…IQFY.

Belongs to the HAUS3 family. In terms of assembly, component of the augmin complex composed of dgt2, dgt3, dgt4, dgt5, dgt6, msd1, msd5 and wac. The complex interacts directly or indirectly with microtubules and is required for centrosome-independent generation of spindle microtubules.

It is found in the cytoplasm. The protein localises to the cytoskeleton. Its subcellular location is the spindle. As part of the augmin complex, plays a role in centrosome-independent generation of spindle microtubules. The complex is required for mitotic spindle assembly through its involvement in localizing gamma-tubulin to spindle microtubules. In Drosophila melanogaster (Fruit fly), this protein is Augmin complex subunit dgt3.